Reading from the N-terminus, the 294-residue chain is Nucleotide-binding protein Reut_A0350 (294 aa).

8–15 is an ATP binding site; that stretch reads GISGSGKS. 57-60 lines the GTP pocket; that stretch reads DIRS.

The protein belongs to the RapZ-like family.

In terms of biological role, displays ATPase and GTPase activities. This is Nucleotide-binding protein Reut_A0350 from Cupriavidus pinatubonensis (strain JMP 134 / LMG 1197) (Cupriavidus necator (strain JMP 134)).